Reading from the N-terminus, the 427-residue chain is Dorsalin-1 (427 aa).

A signal peptide spans 1–20 (MHYFGVLAALSVFNIIACLT). A propeptide spanning residues 21-318 (RGKPLENWKK…PRQHSSRSKR (298 aa)) is cleaved from the precursor. N-linked (GlcNAc...) asparagine glycosylation is found at asparagine 71, asparagine 136, asparagine 265, and asparagine 292. The disordered stretch occupies residues 288–321 (KLGKNDSSSEEEQREEKAIARPRQHSSRSKRSIG). The span at 307-321 (ARPRQHSSRSKRSIG) shows a compositional bias: basic residues. 3 disulfide bridges follow: cysteine 325-cysteine 391, cysteine 354-cysteine 424, and cysteine 358-cysteine 426.

This sequence belongs to the TGF-beta family. In terms of assembly, homodimer; disulfide-linked. In terms of tissue distribution, expressed selectively in the dorsal neural tube. Lower levels seen in kidney and myotomal cells.

The protein localises to the secreted. In terms of biological role, appears to regulate cell differentiation within the neural tube. May regulate the differentiation of cell types along the dorsoventral axis of the neural tube, acting in conjunction with distinct ventralizing signals from the notochord and floor plate. Controls the cell differentiation in the neural tube in several ways: (1) promotes the differentiation of cell types that derive from the dorsal neural tube. (2) ensures that the dorsal neural tube is refractory to ventralizing species from the notochord. (3) can diffuse and influence the fate of cells in more ventral regions of the neural tube. The protein is Dorsalin-1 (DSL1) of Gallus gallus (Chicken).